The chain runs to 244 residues: Lymphotoxin-beta (244 aa).

The Cytoplasmic segment spans residues 1 to 18 (MGALGLEGRGGRLQGRGS). Residues 19 to 48 (LLLAVAGATSLVTLLLAVPITVLAVLALVP) traverse the membrane as a helical; Signal-anchor for type II membrane protein segment. At 49-244 (QDQGGLVTET…KTFFGAVMVG (196 aa)) the chain is on the extracellular side. Residues 88–243 (PAAHLIGAPL…GKTFFGAVMV (156 aa)) enclose the THD domain. Asparagine 222 carries an N-linked (GlcNAc...) asparagine glycan.

Belongs to the tumor necrosis factor family. Heterotrimer of either two LTB and one LTA subunits or (less prevalent) one LTB and two LTA subunits. In terms of tissue distribution, spleen and thymus.

The protein localises to the membrane. Functionally, cytokine that binds to LTBR/TNFRSF3. May play a specific role in immune response regulation. Provides the membrane anchor for the attachment of the heterotrimeric complex to the cell surface. Isoform 2 is probably non-functional. This chain is Lymphotoxin-beta (LTB), found in Homo sapiens (Human).